Here is a 367-residue protein sequence, read N- to C-terminus: B2 bradykinin receptor (367 aa).

At 1 to 36 the chain is on the extracellular side; it reads MLNLTSQVPEPALNGTLPQSSSCFHSDWWNWLNTIQ. N-linked (GlcNAc...) asparagine glycans are attached at residues Asn-3 and Asn-14. A helical membrane pass occupies residues 37–60; it reads APFLWVLFLLAALENIFVLSVFCL. Residues 61–69 are Cytoplasmic-facing; that stretch reads HKNSCTVAE. Residues 70 to 94 traverse the membrane as a helical segment; sequence IYLGNLAMADLILALGLPFWAITIA. The Extracellular portion of the chain corresponds to 95–107; sequence NHFDWLFGEVLCR. Residues Cys-106 and Cys-187 are joined by a disulfide bond. The helical transmembrane segment at 108–129 threads the bilayer; it reads VVNTMIYMNLYSSICFLMLVSI. Over 130–151 the chain is Cytoplasmic; sequence DRYLALVKTMSMGRMRGVRWAK. Tyr-132 is modified (phosphotyrosine). A helical transmembrane segment spans residues 152 to 174; the sequence is LYSLVIWGCTLLLSSPMLAFRTM. The Extracellular segment spans residues 175–197; sequence HEYAAEGHNVTACIIKYPSRSWM. Asn-183 carries an N-linked (GlcNAc...) asparagine glycan. The helical transmembrane segment at 198–224 threads the bilayer; it reads VFTNILLNSVGFLLPLSIITYCTVQIL. Topologically, residues 225 to 243 are cytoplasmic; that stretch reads QVLRNNEMQKFKEIQTERK. A helical transmembrane segment spans residues 244-268; that stretch reads ATVLVLAVLLLFVVCWLPFQISTFL. Residues 269–287 lie on the Extracellular side of the membrane; sequence DTLLRLGVLSGCWDEHAVD. The helical transmembrane segment at 288-311 threads the bilayer; sequence VITQISSYVAYSNSGLNPLVYVIV. At 312 to 367 the chain is on the cytoplasmic side; that stretch reads GKRFRKKSREVYRVLCQKGGCMGEPVQMENSMGTLRTSISVERQIHKLQDWAGKKQ. A Phosphotyrosine modification is found at Tyr-323. The S-palmitoyl cysteine moiety is linked to residue Cys-327. Ser-342 carries the post-translational modification Phosphoserine. A Phosphothreonine modification is found at Thr-345. Ser-349 and Ser-351 each carry phosphoserine; by GRK6.

Belongs to the G-protein coupled receptor 1 family. Bradykinin receptor subfamily. BDKRB2 sub-subfamily. In terms of assembly, forms a complex with PECAM1 and GNAQ. Interacts with PECAM1.

It localises to the cell membrane. In terms of biological role, receptor for bradykinin. It is associated with G proteins that activate a phosphatidylinositol-calcium second messenger system. The chain is B2 bradykinin receptor (BDKRB2) from Sus scrofa (Pig).